Here is a 159-residue protein sequence, read N- to C-terminus: Transmembrane protein 88 (159 aa).

2 consecutive transmembrane segments (helical) span residues Leu43 to Phe63 and Phe88 to Ala108.

This sequence belongs to the TMEM88 family. Interacts (via C-terminus) with DVL1.

Its subcellular location is the cell membrane. In terms of biological role, inhibits the Wnt/beta-catenin signaling pathway. Crucial for heart development and acts downstream of GATA factors in the pre-cardiac mesoderm to specify lineage commitment of cardiomyocyte development. This chain is Transmembrane protein 88 (Tmem88), found in Mus musculus (Mouse).